The following is a 311-amino-acid chain: Aspartate carbamoyltransferase catalytic subunit (311 aa).

Carbamoyl phosphate is bound by residues Arg58 and Thr59. Lys86 is a binding site for L-aspartate. Carbamoyl phosphate-binding residues include Arg108, His136, and Gln139. L-aspartate contacts are provided by Arg169 and Arg224. Carbamoyl phosphate is bound by residues Gly265 and Pro266.

It belongs to the aspartate/ornithine carbamoyltransferase superfamily. ATCase family. Heterododecamer (2C3:3R2) of six catalytic PyrB chains organized as two trimers (C3), and six regulatory PyrI chains organized as three dimers (R2).

The enzyme catalyses carbamoyl phosphate + L-aspartate = N-carbamoyl-L-aspartate + phosphate + H(+). The protein operates within pyrimidine metabolism; UMP biosynthesis via de novo pathway; (S)-dihydroorotate from bicarbonate: step 2/3. Functionally, catalyzes the condensation of carbamoyl phosphate and aspartate to form carbamoyl aspartate and inorganic phosphate, the committed step in the de novo pyrimidine nucleotide biosynthesis pathway. The polypeptide is Aspartate carbamoyltransferase catalytic subunit (Geotalea daltonii (strain DSM 22248 / JCM 15807 / FRC-32) (Geobacter daltonii)).